The sequence spans 160 residues: Ribosomal RNA large subunit methyltransferase H (160 aa).

Residues Leu76, Gly108, and 127-132 (LGKMTW) contribute to the S-adenosyl-L-methionine site.

It belongs to the RNA methyltransferase RlmH family. Homodimer.

It is found in the cytoplasm. The catalysed reaction is pseudouridine(1915) in 23S rRNA + S-adenosyl-L-methionine = N(3)-methylpseudouridine(1915) in 23S rRNA + S-adenosyl-L-homocysteine + H(+). Specifically methylates the pseudouridine at position 1915 (m3Psi1915) in 23S rRNA. This is Ribosomal RNA large subunit methyltransferase H from Rhizobium johnstonii (strain DSM 114642 / LMG 32736 / 3841) (Rhizobium leguminosarum bv. viciae).